A 413-amino-acid polypeptide reads, in one-letter code: Terephthalate 1,2-dioxygenase, terminal oxygenase component subunit alpha 2 (413 aa).

Positions 41–144 constitute a Rieske domain; that stretch reads NYLCLESEIP…CKEEHGPRKL (104 aa). The [2Fe-2S] cluster site is built by cysteine 82, histidine 84, cysteine 102, and histidine 105.

The protein belongs to the bacterial ring-hydroxylating dioxygenase alpha subunit family. In terms of assembly, heterotetramer composed of 2 alpha (TphA2I and TphA2II) and 2 beta (TphA3I and TphA3II) subunits. Part of a multicomponent enzyme system composed of a reductase (TphA1I or TphA1II) and a two-subunit oxygenase component (TphA2I or TphA2II and TphA3I or TphA3II). The cofactor is Fe cation. [2Fe-2S] cluster serves as cofactor.

It catalyses the reaction terephthalate + NADH + O2 + H(+) = (3S,4R)-3,4-dihydroxycyclohexa-1,5-diene-1,4-dicarboxylate + NAD(+). Its activity is regulated as follows. Inhibited by EDTA. Component of the terephthalate 1,2-dioxygenase multicomponent enzyme system which catalyzes the dioxygenation of terephthalate (TER/TPA) to 1,2-dihydroxy-3,5-cyclohexadiene-1,4-dicarboxylic acid (DCD). It can also use 2,5-dicarboxypyridine (PDC) and 1,4-napthalenedicarboxylic acid (NDC) as substrates, and preferentially uses NADPH which is the physiological electron donor. The sequence is that of Terephthalate 1,2-dioxygenase, terminal oxygenase component subunit alpha 2 (tphA2II) from Comamonas sp.